We begin with the raw amino-acid sequence, 256 residues long: uncharacterized protein (256 aa).

Residues 1–23 (MIPPCENAPHIIYHESQRGTRDR) are disordered. Over residues 12–23 (IYHESQRGTRDR) the composition is skewed to basic and acidic residues.

This is an uncharacterized protein from Homo sapiens (Human).